A 145-amino-acid polypeptide reads, in one-letter code: WGATVITNLMSAIPWIGQDIVEFIWGGFSVNNATLNRFFALHFLLPFVLAALVIMHLIAMHDTVGSGNPLGISGNYDRLPFAPYFVFKDLVTVFIFFIVLSVFVFFMPNALGDSENYVMANPMQTPPAIVPEWYLLPFYAILRSI.

Residues 38–58 form a helical membrane-spanning segment; it reads FFALHFLLPFVLAALVIMHLI. Heme b-binding residues include His42 and His56. A ubiquinone is bound at residue His61. The chain crosses the membrane as a helical span at residues 85 to 105; that stretch reads FVFKDLVTVFIFFIVLSVFVF.

This sequence belongs to the cytochrome b family. Fungal cytochrome b-c1 complex contains 10 subunits; 3 respiratory subunits, 2 core proteins and 5 low-molecular weight proteins. Cytochrome b-c1 complex is a homodimer. Heme b serves as cofactor.

The protein resides in the mitochondrion inner membrane. Its function is as follows. Component of the ubiquinol-cytochrome c reductase complex (complex III or cytochrome b-c1 complex) that is part of the mitochondrial respiratory chain. The b-c1 complex mediates electron transfer from ubiquinol to cytochrome c. Contributes to the generation of a proton gradient across the mitochondrial membrane that is then used for ATP synthesis. The protein is Cytochrome b (cob) of Aspergillus fumigatus (Neosartorya fumigata).